The primary structure comprises 239 residues: Purine nucleoside phosphorylase DeoD-type (239 aa).

His-5 is a binding site for a purine D-ribonucleoside. Residues Gly-21, Arg-25, Arg-44, and 88-91 each bind phosphate; that span reads RVGS. Residues 180–182 and 204–205 contribute to the a purine D-ribonucleoside site; these read EME and SD. Catalysis depends on Asp-205, which acts as the Proton donor.

The protein belongs to the PNP/UDP phosphorylase family. Homohexamer; trimer of homodimers.

The catalysed reaction is a purine D-ribonucleoside + phosphate = a purine nucleobase + alpha-D-ribose 1-phosphate. The enzyme catalyses a purine 2'-deoxy-D-ribonucleoside + phosphate = a purine nucleobase + 2-deoxy-alpha-D-ribose 1-phosphate. Catalyzes the reversible phosphorolytic breakdown of the N-glycosidic bond in the beta-(deoxy)ribonucleoside molecules, with the formation of the corresponding free purine bases and pentose-1-phosphate. In Pectobacterium atrosepticum (strain SCRI 1043 / ATCC BAA-672) (Erwinia carotovora subsp. atroseptica), this protein is Purine nucleoside phosphorylase DeoD-type.